A 233-amino-acid polypeptide reads, in one-letter code: DNA-directed RNA polymerase V subunit 5C (233 aa).

Belongs to the archaeal Rpo5/eukaryotic RPB5 RNA polymerase subunit family. As to quaternary structure, component of the RNA polymerase V complex. As to expression, expressed in flower buds and siliques.

Its subcellular location is the nucleus. Functionally, DNA-dependent RNA polymerase catalyzes the transcription of DNA into RNA using the four ribonucleoside triphosphates as substrates. Component of RNA polymerase V involved in RNA-directed DNA methylation-dependent (RdDM) silencing of endogenous repeated sequences, including transposable elements. The polypeptide is DNA-directed RNA polymerase V subunit 5C (NRPE5C) (Arabidopsis thaliana (Mouse-ear cress)).